Reading from the N-terminus, the 57-residue chain is uncharacterized protein (57 aa).

The helical transmembrane segment at 34–54 (AALLDAAALVVIPGLLTAAAV) threads the bilayer.

It localises to the membrane. This is an uncharacterized protein from Dictyostelium discoideum (Social amoeba).